Reading from the N-terminus, the 389-residue chain is Chalcone synthase H2 (389 aa).

Residue cysteine 164 is part of the active site.

The protein belongs to the thiolase-like superfamily. Chalcone/stilbene synthases family.

It localises to the cytoplasm. The enzyme catalyses (E)-4-coumaroyl-CoA + 3 malonyl-CoA + 3 H(+) = 2',4,4',6'-tetrahydroxychalcone + 3 CO2 + 4 CoA. It functions in the pathway secondary metabolite biosynthesis; flavonoid biosynthesis. Functionally, involved in the biosynthesis of prenylated phenolics natural products which contribute to the bitter taste of beer and display broad biological activities. Chalcone synthase that can use 4-coumaroyl-CoA to produce 4,2',4',6'-tetrahydroxychalcone (also termed naringenin-chalcone or chalcone) which can, under specific conditions, spontaneously isomerize into naringenin. The sequence is that of Chalcone synthase H2 from Humulus lupulus (European hop).